A 101-amino-acid chain; its full sequence is NAD(P)H-quinone oxidoreductase subunit 4L, chloroplastic (101 aa).

A run of 3 helical transmembrane segments spans residues 2–22 (LLEH…YGLI), 32–52 (MCLE…SDFF), and 61–81 (IFSI…SAIV).

Belongs to the complex I subunit 4L family. NDH is composed of at least 16 different subunits, 5 of which are encoded in the nucleus.

The protein resides in the plastid. The protein localises to the chloroplast thylakoid membrane. It catalyses the reaction a plastoquinone + NADH + (n+1) H(+)(in) = a plastoquinol + NAD(+) + n H(+)(out). The enzyme catalyses a plastoquinone + NADPH + (n+1) H(+)(in) = a plastoquinol + NADP(+) + n H(+)(out). NDH shuttles electrons from NAD(P)H:plastoquinone, via FMN and iron-sulfur (Fe-S) centers, to quinones in the photosynthetic chain and possibly in a chloroplast respiratory chain. The immediate electron acceptor for the enzyme in this species is believed to be plastoquinone. Couples the redox reaction to proton translocation, and thus conserves the redox energy in a proton gradient. This is NAD(P)H-quinone oxidoreductase subunit 4L, chloroplastic from Carica papaya (Papaya).